The chain runs to 284 residues: Sulfotransferase 2A6 (284 aa).

43 to 48 provides a ligand contact to 3'-phosphoadenylyl sulfate; sequence KSGTNW. Residue histidine 98 is the Proton acceptor of the active site. 3'-phosphoadenylyl sulfate contacts are provided by residues arginine 120, serine 128, tyrosine 183, 217 to 222, and 246 to 248; these read SSFQVM and RNG.

The protein belongs to the sulfotransferase 1 family. As to quaternary structure, oligomer. As to expression, liver, exhibiting a sex-dependent spatial localization in the lobule of the liver.

It is found in the cytoplasm. Its subcellular location is the cytosol. The enzyme catalyses an alcohol + 3'-phosphoadenylyl sulfate = an alkyl sulfate + adenosine 3',5'-bisphosphate + H(+). It catalyses the reaction glycolithocholate + 3'-phosphoadenylyl sulfate = sulfoglycolithocholate + adenosine 3',5'-bisphosphate + H(+). The catalysed reaction is taurolithocholate + 3'-phosphoadenylyl sulfate = taurolithocholate 3-sulfate + adenosine 3',5'-bisphosphate + H(+). It carries out the reaction 3beta-hydroxyandrost-5-en-17-one + 3'-phosphoadenylyl sulfate = dehydroepiandrosterone 3-sulfate + adenosine 3',5'-bisphosphate + H(+). The enzyme catalyses 3beta-hydroxy-5-cholenate + 3'-phosphoadenylyl sulfate = 3beta-sulfo-5-cholenate + adenosine 3',5'-bisphosphate + H(+). It catalyses the reaction deoxycholate + 3'-phosphoadenylyl sulfate = 3alpha-sulfodeoxycholate + adenosine 3',5'-bisphosphate + H(+). The catalysed reaction is glycodeoxycholate + 3'-phosphoadenylyl sulfate = 3alpha-sulfoglycodeoxycholate + adenosine 3',5'-bisphosphate + H(+). It carries out the reaction taurodeoxycholate + 3'-phosphoadenylyl sulfate = 3alpha-sulfotaurodeoxycholate + adenosine 3',5'-bisphosphate + H(+). Its function is as follows. Sulfotransferase that utilizes 3'-phospho-5'-adenylyl sulfate (PAPS) as sulfonate donor to catalyze the sulfonation of the hydroxyl group of hydroxysteroids and bile acids. Prefered substrates are dehydroepiandrosterone (DHEA, also known as 3beta-hydroxyandrost-5-en-17-one) and 3beta-hydroxy-5-cholenoate, but can also catalyze deoxycholate and its conjugates, and lithocholate conjugates, in vitro. The sequence is that of Sulfotransferase 2A6 from Rattus norvegicus (Rat).